The primary structure comprises 421 residues: Putative hydro-lyase KRH_21160 (421 aa).

2 disordered regions span residues 200 to 298 and 312 to 421; these read TWGH…SPVT and TRAG…AVSR. The segment covering 224 to 237 has biased composition (basic residues); sequence GSRRRPRWWSRLRR. 2 stretches are compositionally biased toward low complexity: residues 243–260 and 370–380; these read PRATCSSPTPGTPTTRCP and SRGPGPCPRAA.

This sequence belongs to the D-glutamate cyclase family.

The protein is Putative hydro-lyase KRH_21160 of Kocuria rhizophila (strain ATCC 9341 / DSM 348 / NBRC 103217 / DC2201).